Consider the following 309-residue polypeptide: Homoserine O-succinyltransferase (309 aa).

The active-site Acyl-thioester intermediate is Cys142. Substrate-binding residues include Lys163 and Ser192. His235 (proton acceptor) is an active-site residue. Residue Glu237 is part of the active site. Arg249 lines the substrate pocket.

The protein belongs to the MetA family.

Its subcellular location is the cytoplasm. It catalyses the reaction L-homoserine + succinyl-CoA = O-succinyl-L-homoserine + CoA. Its pathway is amino-acid biosynthesis; L-methionine biosynthesis via de novo pathway; O-succinyl-L-homoserine from L-homoserine: step 1/1. Its function is as follows. Transfers a succinyl group from succinyl-CoA to L-homoserine, forming succinyl-L-homoserine. This Proteus mirabilis (strain HI4320) protein is Homoserine O-succinyltransferase.